The sequence spans 183 residues: Transcription factor E (183 aa).

The 94-residue stretch at 4-97 (YIELVRRYVY…SWSIKDEDIR (94 aa)) folds into the HTH TFE/IIEalpha-type domain.

Belongs to the TFE family. Monomer. Interaction with RNA polymerase subunits RpoF and RpoE is necessary for Tfe stimulatory transcription activity. Able to interact with Tbp and RNA polymerase in the absence of DNA promoter. Interacts both with the preinitiation and elongation complexes.

In terms of biological role, transcription factor that plays a role in the activation of archaeal genes transcribed by RNA polymerase. Facilitates transcription initiation by enhancing TATA-box recognition by TATA-box-binding protein (Tbp), and transcription factor B (Tfb) and RNA polymerase recruitment. Not absolutely required for transcription in vitro, but particularly important in cases where Tbp or Tfb function is not optimal. It dynamically alters the nucleic acid-binding properties of RNA polymerases by stabilizing the initiation complex and destabilizing elongation complexes. Seems to translocate with the RNA polymerase following initiation and acts by binding to the non template strand of the transcription bubble in elongation complexes. This is Transcription factor E from Caldivirga maquilingensis (strain ATCC 700844 / DSM 13496 / JCM 10307 / IC-167).